A 672-amino-acid polypeptide reads, in one-letter code: GPI mannosyltransferase pigv-1 (672 aa).

The Cytoplasmic segment spans residues 1 to 134 (MRRREPGRDV…TQRCLGFCFR (134 aa)). Residues 82–94 (REESDSSSSREDS) are compositionally biased toward basic and acidic residues. A disordered region spans residues 82-115 (REESDSSSSREDSPLGSTETGESCSTTDDEESKE). Low complexity predominate over residues 97–107 (GSTETGESCST). Residues 135 to 155 (QLFFSRMWVFILQFIASYYAG) traverse the membrane as a helical segment. Over 156 to 239 (DRFRTDGFNL…NGMESVFGWT (84 aa)) the chain is Extracellular. The helical transmembrane segment at 240–260 (FPPWVTITLAAVFVNLFCFLL) threads the bilayer. At 261–277 (CGMTLYQVVLIMTRSVK) the chain is on the cytoplasmic side. 2 helical membrane passes run 278–298 (ISLL…FSSA) and 299–319 (YSES…LFGL). Residues 320–345 (RGKGFWHRMLKGFTGTICFGLTFAVR) lie on the Extracellular side of the membrane. Residues 346–366 (SNGLLNFLYVAWIWCGTLLWD) traverse the membrane as a helical segment. The Cytoplasmic segment spans residues 367–423 (EEMPIPDCHKLISTLAATKNERYKQEWQAKFWRFQQKRKQNRKVFRWTDPNFSRCVT). The chain crosses the membrane as a helical span at residues 424-444 (LFIVIVCAISATLLFFTPYVF). The Extracellular segment spans residues 445-520 (MTNFTADEFC…WSVKFFGYWK (76 aa)). The chain crosses the membrane as a helical span at residues 521–541 (IKKIPCFLMMLPAAILTVLAI). At 542–569 (KSSWNDVFLNKRWNNIWVLTARSDHSLP) the chain is on the cytoplasmic side. Residues 570–590 (MAIHSSVLLFVAIFYINSEVF) form a helical membrane-spanning segment. The Extracellular segment spans residues 591-592 (TR). The chain crosses the membrane as a helical span at residues 593-613 (IIFSSSPFIYIYIATYIDKLT). Over 614–648 (QGTIAGNRLWQYFESPGILPFFVFRRVWQDGWRGK) the chain is Cytoplasmic. A helical membrane pass occupies residues 649 to 669 (LLYIYILGYFVFGTMAHSAWL). At 670–672 (PFT) the chain is on the extracellular side.

Belongs to the PIGV family. In terms of tissue distribution, expressed in epithelial tissues including the epidermis, pharynx, intestine, rectum and excretory cell during embryogenesis.

It localises to the endoplasmic reticulum membrane. The protein operates within glycolipid biosynthesis; glycosylphosphatidylinositol-anchor biosynthesis. Its function is as follows. Alpha-1,6-mannosyltransferase involved in glycosylphosphatidylinositol-anchor biosynthesis. Transfers the second mannose to the glycosylphosphatidylinositol during GPI precursor assembly. Required for maintenance of epithelial integrity during embryogenesis. This Caenorhabditis elegans protein is GPI mannosyltransferase pigv-1.